A 229-amino-acid polypeptide reads, in one-letter code: Large ribosomal subunit protein uL1 (229 aa).

The protein belongs to the universal ribosomal protein uL1 family. In terms of assembly, part of the 50S ribosomal subunit.

In terms of biological role, binds directly to 23S rRNA. The L1 stalk is quite mobile in the ribosome, and is involved in E site tRNA release. Protein L1 is also a translational repressor protein, it controls the translation of the L11 operon by binding to its mRNA. This Flavobacterium johnsoniae (strain ATCC 17061 / DSM 2064 / JCM 8514 / BCRC 14874 / CCUG 350202 / NBRC 14942 / NCIMB 11054 / UW101) (Cytophaga johnsonae) protein is Large ribosomal subunit protein uL1.